The following is a 104-amino-acid chain: Guanyl-specific ribonuclease Ap1 (104 aa).

Intrachain disulfides connect Cys2–Cys10 and Cys6–Cys103. Residue His40 is part of the active site. Glu58 acts as the Proton acceptor in catalysis. His92 (proton donor) is an active-site residue.

The protein belongs to the ribonuclease N1/T1 family.

The protein resides in the secreted. It carries out the reaction [RNA] containing guanosine + H2O = an [RNA fragment]-3'-guanosine-3'-phosphate + a 5'-hydroxy-ribonucleotide-3'-[RNA fragment].. The protein is Guanyl-specific ribonuclease Ap1 of Aspergillus pallidus.